We begin with the raw amino-acid sequence, 116 residues long: Ribonuclease P protein component (116 aa).

It belongs to the RnpA family. Consists of a catalytic RNA component (M1 or rnpB) and a protein subunit.

It carries out the reaction Endonucleolytic cleavage of RNA, removing 5'-extranucleotides from tRNA precursor.. In terms of biological role, RNaseP catalyzes the removal of the 5'-leader sequence from pre-tRNA to produce the mature 5'-terminus. It can also cleave other RNA substrates such as 4.5S RNA. The protein component plays an auxiliary but essential role in vivo by binding to the 5'-leader sequence and broadening the substrate specificity of the ribozyme. In Bacillus velezensis (strain DSM 23117 / BGSC 10A6 / LMG 26770 / FZB42) (Bacillus amyloliquefaciens subsp. plantarum), this protein is Ribonuclease P protein component.